Reading from the N-terminus, the 417-residue chain is Serine hydroxymethyltransferase (417 aa).

(6S)-5,6,7,8-tetrahydrofolate contacts are provided by residues Leu121 and 125–127 (GHL). The residue at position 229 (Lys229) is an N6-(pyridoxal phosphate)lysine. 354–356 (SPF) is a binding site for (6S)-5,6,7,8-tetrahydrofolate.

This sequence belongs to the SHMT family. Homodimer. Pyridoxal 5'-phosphate is required as a cofactor.

It localises to the cytoplasm. It catalyses the reaction (6R)-5,10-methylene-5,6,7,8-tetrahydrofolate + glycine + H2O = (6S)-5,6,7,8-tetrahydrofolate + L-serine. It functions in the pathway one-carbon metabolism; tetrahydrofolate interconversion. Its pathway is amino-acid biosynthesis; glycine biosynthesis; glycine from L-serine: step 1/1. Its function is as follows. Catalyzes the reversible interconversion of serine and glycine with tetrahydrofolate (THF) serving as the one-carbon carrier. This reaction serves as the major source of one-carbon groups required for the biosynthesis of purines, thymidylate, methionine, and other important biomolecules. Also exhibits THF-independent aldolase activity toward beta-hydroxyamino acids, producing glycine and aldehydes, via a retro-aldol mechanism. The sequence is that of Serine hydroxymethyltransferase from Dichelobacter nodosus (strain VCS1703A).